A 369-amino-acid chain; its full sequence is Chanoclavine-I aldehyde reductase fgaOx3 (369 aa).

FMN is bound by residues 23 to 25 (PMT), alanine 58, glutamine 100, and histidine 169. Residues histidine 169 and asparagine 172 each coordinate substrate. The active-site Proton donor is the tyrosine 174. FMN is bound by residues glycine 292, 316–317 (GR), and arginine 317. Tyrosine 344 is a substrate binding site.

The protein belongs to the NADH:flavin oxidoreductase/NADH oxidase family. As to quaternary structure, monomer. It depends on FMN as a cofactor.

It catalyses the reaction dihydrochanoclavine-I aldehyde + NADP(+) = chanoclavine-I aldehyde + NADPH + H(+). It functions in the pathway alkaloid biosynthesis; ergot alkaloid biosynthesis. In terms of biological role, chanoclavine-I aldehyde reductase; part of the gene cluster that mediates the biosynthesis of isofumigaclavines, fungal ergot alkaloids. The tryptophan dimethylallyltransferase ifgA catalyzes the first step of ergot alkaloid biosynthesis by condensing dimethylallyl diphosphate (DMAP) and tryptophan to form 4-dimethylallyl-L-tryptophan. The second step is catalyzed by the methyltransferase ifgB that methylates 4-dimethylallyl-L-tryptophan in the presence of S-adenosyl-L-methionine, resulting in the formation of N-methyl-dimethylallyl-L-tryptophan. The catalase ifgD and the FAD-dependent oxidoreductase ifgC then transform N-methyl-dimethylallyl-L-tryptophan to chanoclavine-I which is further oxidized by ifgE in the presence of NAD(+), resulting in the formation of chanoclavine-I aldehyde. The chanoclavine-I aldehyde reductases ifgG and/or fgaOx3 reduce chanoclavine-I aldehyde to dihydrochanoclavine-I aldehyde that spontaneously dehydrates to form 6,8-dimethyl-6,7-didehydroergoline. The festuclavine dehydrogenases ifgF1 and/or ifgF2 then catalyze the reduction of 6,8-dimethyl-6,7-didehydroergoline to form festuclavine. Hydrolysis of festuclavine by a yet undetermined cytochrome P450 monooxygenase (called ifgH) then leads to the formation of isofumigaclavine B which is in turn acetylated by ifgI to isofumigaclavine A. Penicillium roqueforti has interestingly at least two sets of genes for the consumption of chanoclavine-I aldehyde on three different loci, the OYEs ifgG/fgaOx3 and the festuclavine synthase homologs ifgF1/ifgF2. The reason for the duplication of these genes is unclear, probably to ensure the conversion of chanoclavine-I aldehyde by differential gene expression under various environmental conditions. The protein is Chanoclavine-I aldehyde reductase fgaOx3 of Penicillium roqueforti (strain FM164).